The sequence spans 207 residues: Small ribosomal subunit protein uS4 (207 aa).

Over residues 31–40 (KCRLDNKPGQ) the composition is skewed to basic and acidic residues. Residues 31 to 56 (KCRLDNKPGQDGRTSGSRTSDYGNQL) are disordered. The span at 42 to 53 (GRTSGSRTSDYG) shows a compositional bias: polar residues. The S4 RNA-binding domain maps to 97–158 (SRLDNVVYRM…KAKKQARITE (62 aa)).

It belongs to the universal ribosomal protein uS4 family. In terms of assembly, part of the 30S ribosomal subunit. Contacts protein S5. The interaction surface between S4 and S5 is involved in control of translational fidelity.

In terms of biological role, one of the primary rRNA binding proteins, it binds directly to 16S rRNA where it nucleates assembly of the body of the 30S subunit. Functionally, with S5 and S12 plays an important role in translational accuracy. This Polynucleobacter necessarius subsp. necessarius (strain STIR1) protein is Small ribosomal subunit protein uS4.